The chain runs to 436 residues: Prenyltransferase nscD (436 aa).

Belongs to the tryptophan dimethylallyltransferase family.

Its pathway is secondary metabolite biosynthesis. In terms of biological role, prenyltransferase; part of the gene cluster that mediates the biosynthesis of neosartoricin B, a prenylated anthracenone that probably exhibits T-cell antiproliferative activity, suggestive of a physiological role as an immunosuppressive agent. The non-reducing polyketide synthase nscA probably synthesizes and cyclizes the decaketide backbone. The hydrolase nscB then mediates the product release through hydrolysis followed by spontaneous decarboxylation. The prenyltransferase nscD catalyzes the addition of the dimethylallyl group to the aromatic C5. The FAD-dependent monooxygenase nscC is then responsible for the stereospecific hydroxylation at C2. Neosartoricin B can be converted into two additional compounds neosartoricins C and D. Neosartoricin C is a spirocyclic compound that is cyclized through the attack of C3 hydroxyl on C14, followed by dehydration. On the other hand, neosartoricin D is a further cyclized compound in which attack of C2 on C14 in neosartoricin C results in the formation of the acetal-containing dioxabicyclo-octanone ring. Both of these compounds are novel and possibly represent related metabolites of the gene cluster. This chain is Prenyltransferase nscD, found in Arthroderma gypseum (strain ATCC MYA-4604 / CBS 118893) (Microsporum gypseum).